Reading from the N-terminus, the 244-residue chain is MFNNLKNKEQEELLPEHIGIIMDGNGRWAKQKGKPRIFGHKAGMDSLKDVAVHGARRGIKVMTVYAFSTENWTRPVDEVKFIMSLPIDFYSKYVPVLKEENIQIRMIGEREGLPKATLDSIDRAAQETSENDGMILNFAMNYGGRRDIILAIQELAKSGQDLSLLTEEELSKHLQTAVLSENLRDPDLIIRTSGEQRMSNFLTWQSAYSELYFAQTAWPDFDDKELDKAISAFQKRDRRYGGVK.

Asp23 is an active-site residue. Asp23 is a binding site for Mg(2+). Substrate contacts are provided by residues 24 to 27 (GNGR), Trp28, Arg36, His40, and 68 to 70 (STE). The Proton acceptor role is filled by Asn71. Residues Trp72, Arg74, Arg191, and 197 to 199 (RMS) each bind substrate. Residue Glu210 coordinates Mg(2+).

This sequence belongs to the UPP synthase family. Homodimer. The cofactor is Mg(2+).

Catalyzes the condensation of isopentenyl diphosphate (IPP) with allylic pyrophosphates generating different type of terpenoids. The protein is Isoprenyl transferase of Lactococcus lactis subsp. lactis (strain IL1403) (Streptococcus lactis).